Reading from the N-terminus, the 246-residue chain is Large ribosomal subunit protein uL3 (246 aa).

Residues 140–162 (SHRSIGSTGGRQDPGKTFKNKKM) are disordered. Glutamine 151 carries the N5-methylglutamine modification.

Belongs to the universal ribosomal protein uL3 family. Part of the 50S ribosomal subunit. Forms a cluster with proteins L14 and L19. In terms of processing, methylated by PrmB.

Functionally, one of the primary rRNA binding proteins, it binds directly near the 3'-end of the 23S rRNA, where it nucleates assembly of the 50S subunit. This is Large ribosomal subunit protein uL3 from Methylobacterium sp. (strain 4-46).